We begin with the raw amino-acid sequence, 589 residues long: Sulfite reductase [NADPH] hemoprotein beta-component (589 aa).

4 residues coordinate [4Fe-4S] cluster: Cys-443, Cys-449, Cys-488, and Cys-492. Cys-492 provides a ligand contact to siroheme.

The protein belongs to the nitrite and sulfite reductase 4Fe-4S domain family. In terms of assembly, alpha(8)-beta(8). The alpha component is a flavoprotein, the beta component is a hemoprotein. Siroheme serves as cofactor. The cofactor is [4Fe-4S] cluster.

It catalyses the reaction hydrogen sulfide + 3 NADP(+) + 3 H2O = sulfite + 3 NADPH + 4 H(+). It functions in the pathway sulfur metabolism; hydrogen sulfide biosynthesis; hydrogen sulfide from sulfite (NADPH route): step 1/1. Its function is as follows. Component of the sulfite reductase complex that catalyzes the 6-electron reduction of sulfite to sulfide. This is one of several activities required for the biosynthesis of L-cysteine from sulfate. The protein is Sulfite reductase [NADPH] hemoprotein beta-component of Neisseria meningitidis serogroup C / serotype 2a (strain ATCC 700532 / DSM 15464 / FAM18).